The following is a 441-amino-acid chain: Myocyte-specific enhancer factor 2C (441 aa).

An MADS-box domain is found at 1–61 (MGRKKIQITR…NKLFQYASTD (61 aa)). Lys-4 carries the N6-acetyllysine modification. A DNA-binding region (mef2-type) is located at residues 58-86 (ASTDMDKVLLKYTEYNEPHESRTNSDIVE). Ser-59 carries the post-translational modification Phosphoserine; by CK2. The interval 91-116 (KGLNGCDSPDPDADDSVGHSPESEDK) is disordered. 3 positions are modified to phosphoserine: Ser-98, Ser-106, and Ser-110. An N6-acetyllysine mark is found at Lys-116 and Lys-119. The tract at residues 180–224 (NSMSPGVTHRPPSAGNTGGLMGGDLTSGAGTSAGNGYGNPRNSPG) is disordered. Phosphoserine is present on residues Ser-222 and Ser-228. 2 positions are modified to N6-acetyllysine: Lys-234 and Lys-239. At Ser-240 the chain carries Phosphoserine. 2 positions are modified to N6-acetyllysine: Lys-252 and Lys-264. The tract at residues 271–278 (SEDVDLLL) is beta domain. Thr-293 and Thr-300 each carry phosphothreonine; by MAPK7 and MAPK14. Residues 353–441 (QHLHSMPPSA…RMRLSEGWAT (89 aa)) form a disordered region. The span at 362-377 (ALSQLGDRTTTPSRYP) shows a compositional bias: polar residues. At Ser-387 the chain carries Phosphoserine; by MAPK7. A compositionally biased stretch (low complexity) spans 387–400 (SPVDSLSSCSSSYD). Residues 401–411 (GSDREDHRNEF) are compositionally biased toward basic and acidic residues. Ser-413 carries the post-translational modification Phosphoserine.

Belongs to the MEF2 family. As to quaternary structure, forms a complex with class II HDACs in undifferentiating cells. On myogenic differentiation, HDACs are released into the cytoplasm allowing MEF2s to interact with other proteins for activation. Interacts with EP300 in differentiating cells; the interaction acetylates MEF2C leading to increased DNA binding and activation. Interacts with HDAC7 and CARM1. Interacts with HDAC4, HDAC7 and HDAC9; the interaction with HDACs represses transcriptional activity. Interacts with LPIN1. Interacts with MYOCD. Interacts with AKAP13. Interacts with FOXK1; the interaction inhibits MEF2C transactivation activity. Interacts (via N-terminus) with HABP4; this interaction decreases DNA-binding activity of MEF2C in myocardial cells in response to mechanical stress. Interacts with JPH2; interaction specifically takes place with the Junctophilin-2 N-terminal fragment cleavage product of JPH2. Interacts (via MADS box) with SOX18. Interacts with PHF7; the interaction promotes MEF2C binding to its transcription targets. Post-translationally, phosphorylation on Ser-59 enhances DNA binding activity. Acetylated by p300 on several sites in diffentiating myocytes. Acetylation on Lys-4 increases DNA binding and transactivation. In terms of processing, proteolytically cleaved in cerebellar granule neurons, probably by caspase 7, following neurotoxicity.

It localises to the nucleus. The protein localises to the cytoplasm. The protein resides in the sarcoplasm. Transcription activator which binds specifically to the MEF2 element present in the regulatory regions of many muscle-specific genes. Controls cardiac morphogenesis and myogenesis, and is also involved in vascular development. Enhances transcriptional activation mediated by SOX18. Plays an essential role in hippocampal-dependent learning and memory by suppressing the number of excitatory synapses and thus regulating basal and evoked synaptic transmission. Crucial for normal neuronal development, distribution, and electrical activity in the neocortex. Necessary for proper development of megakaryocytes and platelets and for bone marrow B-lymphopoiesis. Required for B-cell survival and proliferation in response to BCR stimulation, efficient IgG1 antibody responses to T-cell-dependent antigens and for normal induction of germinal center B-cells. May also be involved in neurogenesis and in the development of cortical architecture. This Bos taurus (Bovine) protein is Myocyte-specific enhancer factor 2C.